The sequence spans 212 residues: Ras-related protein RABC1 (212 aa).

An N-acetylglycine modification is found at Gly2. 20-27 (GDSGVGKS) serves as a coordination point for GTP. The short motif at 41–49 (LSPTIGVDF) is the Effector region element. GTP is bound by residues 67–71 (DTAGQ), 127–130 (NKVD), and 157–158 (SA). A disordered region spans residues 182 to 212 (TAEGSSGGKKNIFKQNPAQTTSTSSSYCCSS). A compositionally biased stretch (low complexity) spans 201–212 (TTSTSSSYCCSS). Residues Cys209 and Cys210 are each lipidated (S-geranylgeranyl cysteine).

The protein belongs to the small GTPase superfamily. Rab family.

The protein localises to the cell membrane. Intracellular vesicle trafficking and protein transport. The chain is Ras-related protein RABC1 (RABC1) from Arabidopsis thaliana (Mouse-ear cress).